The following is a 72-amino-acid chain: Cytochrome c oxidase copper chaperone 2 (72 aa).

The Cu cation site is built by Cys32 and Cys33. The region spanning 32 to 72 (CCACPDTKKLRDECIVEHGESACTKWIEAHILCLRSEGFKV) is the CHCH domain. Short sequence motifs (cx9C motif) lie at residues 35-45 (CPDTKKLRDEC) and 54-64 (CTKWIEAHILC). 2 disulfides stabilise this stretch: Cys35-Cys64 and Cys45-Cys54.

Belongs to the COX17 family.

It is found in the mitochondrion intermembrane space. Copper chaperone for cytochrome c oxidase (COX). Binds 2 copper ions and delivers them to the Cu(A) site of COX. The chain is Cytochrome c oxidase copper chaperone 2 (COX17-2) from Arabidopsis thaliana (Mouse-ear cress).